We begin with the raw amino-acid sequence, 243 residues long: Derlin-1.1 (243 aa).

The Cytoplasmic segment spans residues Met-1–Thr-20. The helical transmembrane segment at Leu-21–Leu-41 threads the bilayer. Residues Asp-42 to Leu-55 are Lumenal-facing. A helical transmembrane segment spans residues Leu-56–Ile-76. The Cytoplasmic portion of the chain corresponds to Ala-77–Asp-94. Residues Phe-95–Phe-115 traverse the membrane as a helical segment. Residues Asn-116–Ala-157 are Lumenal-facing. Residues Met-158 to Val-178 form a helical membrane-spanning segment. The Cytoplasmic segment spans residues Gly-179–Gln-243. Residues Ser-219 to Gln-243 are disordered.

The protein belongs to the derlin family. In terms of tissue distribution, expressed in roots, stalks, leaves, immature ears, embryo and endosperm.

It is found in the endoplasmic reticulum membrane. Its function is as follows. May be involved in the degradation process of specific misfolded endoplasmic reticulum (ER) luminal proteins. In Zea mays (Maize), this protein is Derlin-1.1 (DER1.1).